The chain runs to 952 residues: Protein translocase subunit SecA (952 aa).

ATP contacts are provided by residues Q135, 153–157 (GEGKT), and D575. Low complexity predominate over residues 916–930 (VSAKAATQPAAPAAK). The tract at residues 916 to 952 (VSAKAATQPAAPAAKEVGRNDPCPCGSGKKYKKCCGK) is disordered. Residues C938, C940, C949, and C950 each coordinate Zn(2+).

This sequence belongs to the SecA family. As to quaternary structure, monomer and homodimer. Part of the essential Sec protein translocation apparatus which comprises SecA, SecYEG and auxiliary proteins SecDF. Other proteins may also be involved. The cofactor is Zn(2+).

It localises to the cell membrane. The protein resides in the cytoplasm. The enzyme catalyses ATP + H2O + cellular proteinSide 1 = ADP + phosphate + cellular proteinSide 2.. Part of the Sec protein translocase complex. Interacts with the SecYEG preprotein conducting channel. Has a central role in coupling the hydrolysis of ATP to the transfer of proteins into and across the cell membrane, serving as an ATP-driven molecular motor driving the stepwise translocation of polypeptide chains across the membrane. The sequence is that of Protein translocase subunit SecA from Dehalococcoides mccartyi (strain ATCC BAA-2266 / KCTC 15142 / 195) (Dehalococcoides ethenogenes (strain 195)).